Consider the following 321-residue polypeptide: Malate dehydrogenase (321 aa).

NAD(+) contacts are provided by residues glycine 10–glycine 15 and aspartate 34. 2 residues coordinate substrate: arginine 83 and arginine 89. Residues asparagine 96 and isoleucine 119–asparagine 121 contribute to the NAD(+) site. Residues asparagine 121 and arginine 152 each coordinate substrate. Histidine 176 acts as the Proton acceptor in catalysis.

The protein belongs to the LDH/MDH superfamily. MDH type 3 family.

It carries out the reaction (S)-malate + NAD(+) = oxaloacetate + NADH + H(+). Functionally, catalyzes the reversible oxidation of malate to oxaloacetate. The polypeptide is Malate dehydrogenase (Methylocella silvestris (strain DSM 15510 / CIP 108128 / LMG 27833 / NCIMB 13906 / BL2)).